A 430-amino-acid chain; its full sequence is Enolase (430 aa).

Residue Gln168 participates in (2R)-2-phosphoglycerate binding. Catalysis depends on Glu210, which acts as the Proton donor. Residues Asp247, Glu288, and Asp315 each coordinate Mg(2+). (2R)-2-phosphoglycerate contacts are provided by Lys340, Arg369, Ser370, and Lys391. Lys340 serves as the catalytic Proton acceptor.

Belongs to the enolase family. It depends on Mg(2+) as a cofactor.

It is found in the cytoplasm. The protein resides in the secreted. Its subcellular location is the cell surface. The enzyme catalyses (2R)-2-phosphoglycerate = phosphoenolpyruvate + H2O. It participates in carbohydrate degradation; glycolysis; pyruvate from D-glyceraldehyde 3-phosphate: step 4/5. In terms of biological role, catalyzes the reversible conversion of 2-phosphoglycerate (2-PG) into phosphoenolpyruvate (PEP). It is essential for the degradation of carbohydrates via glycolysis. This chain is Enolase, found in Rippkaea orientalis (strain PCC 8801 / RF-1) (Cyanothece sp. (strain PCC 8801)).